We begin with the raw amino-acid sequence, 528 residues long: GMP synthase [glutamine-hydrolyzing] (528 aa).

The region spanning 13–204 (SILILDFGSQ…VYSIAKCKAD (192 aa)) is the Glutamine amidotransferase type-1 domain. Cys90 (nucleophile) is an active-site residue. Active-site residues include His178 and Glu180. The GMPS ATP-PPase domain occupies 205 to 403 (WTTETFLEET…LGLPDEIIKR (199 aa)). 232–238 (SGGVDSS) serves as a coordination point for ATP.

In terms of assembly, homodimer.

The enzyme catalyses XMP + L-glutamine + ATP + H2O = GMP + L-glutamate + AMP + diphosphate + 2 H(+). The protein operates within purine metabolism; GMP biosynthesis; GMP from XMP (L-Gln route): step 1/1. Catalyzes the synthesis of GMP from XMP. The polypeptide is GMP synthase [glutamine-hydrolyzing] (Prochlorococcus marinus subsp. pastoris (strain CCMP1986 / NIES-2087 / MED4)).